We begin with the raw amino-acid sequence, 242 residues long: NAD(P)H-hydrate epimerase (242 aa).

The YjeF N-terminal domain occupies 11–221 (AKALDAELMS…KVITKKFNLS (211 aa)). Position 61–65 (61–65 (NNGGD)) interacts with (6S)-NADPHX. K(+) is bound by residues Asn-62 and Asp-128. Residues 132 to 138 (GFSFKGP) and Asp-161 contribute to the (6S)-NADPHX site. A K(+)-binding site is contributed by Ser-164.

It belongs to the NnrE/AIBP family. Requires K(+) as cofactor.

It localises to the cytoplasm. The protein resides in the mitochondrion. The protein localises to the nucleus. The catalysed reaction is (6R)-NADHX = (6S)-NADHX. It carries out the reaction (6R)-NADPHX = (6S)-NADPHX. Catalyzes the epimerization of the S- and R-forms of NAD(P)HX, a damaged form of NAD(P)H that is a result of enzymatic or heat-dependent hydration. This is a prerequisite for the S-specific NAD(P)H-hydrate dehydratase to allow the repair of both epimers of NAD(P)HX. May have a role in meiosis. The polypeptide is NAD(P)H-hydrate epimerase (mug182) (Schizosaccharomyces pombe (strain 972 / ATCC 24843) (Fission yeast)).